The following is a 143-amino-acid chain: Insulin-like growth factor 1 (143 aa).

The first 32 residues, 1-32, serve as a signal peptide directing secretion; sequence MITPTVKMRILSSSHLFYLALCLLTFTSSATA. The segment at 33-61 is b; that stretch reads GPETLCGAELVDALQFVCGDRGFYFNKPT. 3 disulfide bridges follow: C38–C80, C50–C93, and C79–C84. The segment at 62–73 is c; the sequence is GYGSSSRRAPQT. Positions 74 to 94 are a; it reads GIVDECCFRSCDLRRLEMYCA. A d region spans residues 95–102; it reads PLKPAKAA. The segment at 99–143 is disordered; it reads AKAARSVRAQRHTDMPKTQKYQPPSTNKKMKSQRRRKGSTFEEHK. Residues 103–143 constitute a propeptide, e peptide; that stretch reads RSVRAQRHTDMPKTQKYQPPSTNKKMKSQRRRKGSTFEEHK. Basic residues predominate over residues 126-136; the sequence is KKMKSQRRRKG.

Belongs to the insulin family. Forms a ternary complex with IGFR1 and ITGAV:ITGB3. Forms a ternary complex with IGFR1 and ITGA6:ITGB4. Forms a ternary complex with IGFBP3 and ALS.

The protein resides in the secreted. Its function is as follows. The insulin-like growth factors, isolated from plasma, are structurally and functionally related to insulin but have a much higher growth-promoting activity. May be a physiological regulator of [1-14C]-2-deoxy-D-glucose (2DG) transport and glycogen synthesis in osteoblasts. Stimulates glucose transport in bone-derived osteoblastic (PyMS) cells and is effective at much lower concentrations than insulin, not only regarding glycogen and DNA synthesis but also with regard to enhancing glucose uptake. May play a role in synapse maturation. Ca(2+)-dependent exocytosis of IGF1 is required for sensory perception of smell in the olfactory bulb. Acts as a ligand for IGF1R. Binds to the alpha subunit of IGF1R, leading to the activation of the intrinsic tyrosine kinase activity which autophosphorylates tyrosine residues in the beta subunit thus initiating a cascade of down-stream signaling events leading to activation of the PI3K-AKT/PKB and the Ras-MAPK pathways. Binds to integrins ITGAV:ITGB3 and ITGA6:ITGB4. Its binding to integrins and subsequent ternary complex formation with integrins and IGFR1 are essential for IGF1 signaling. Induces the phosphorylation and activation of IGFR1, MAPK3/ERK1, MAPK1/ERK2 and AKT1. As part of the MAPK/ERK signaling pathway, acts as a negative regulator of apoptosis in cardiomyocytes via promotion of STUB1/CHIP-mediated ubiquitination and degradation of ICER-type isoforms of CREM. The sequence is that of Insulin-like growth factor 1 from Oryctolagus cuniculus (Rabbit).